The primary structure comprises 396 residues: Glutamyl-tRNA reductase (396 aa).

Residues Thr45–Arg48, Ser101, Glu106–Gln108, and Gln112 each bind substrate. Cys46 functions as the Nucleophile in the catalytic mechanism. Gly177 to Gly182 is a binding site for NADP(+).

It belongs to the glutamyl-tRNA reductase family. As to quaternary structure, homodimer.

It carries out the reaction (S)-4-amino-5-oxopentanoate + tRNA(Glu) + NADP(+) = L-glutamyl-tRNA(Glu) + NADPH + H(+). The protein operates within porphyrin-containing compound metabolism; protoporphyrin-IX biosynthesis; 5-aminolevulinate from L-glutamyl-tRNA(Glu): step 1/2. Functionally, catalyzes the NADPH-dependent reduction of glutamyl-tRNA(Glu) to glutamate 1-semialdehyde (GSA). The protein is Glutamyl-tRNA reductase of Clostridium acetobutylicum (strain ATCC 824 / DSM 792 / JCM 1419 / IAM 19013 / LMG 5710 / NBRC 13948 / NRRL B-527 / VKM B-1787 / 2291 / W).